A 183-amino-acid polypeptide reads, in one-letter code: Ribosome rescue factor SmrB (183 aa).

The Smr domain maps to 98–173; sequence LDLHGLTQLQ…GDAALLVLIE (76 aa).

It belongs to the SmrB family. As to quaternary structure, associates with collided ribosomes, but not with correctly translating polysomes.

In terms of biological role, acts as a ribosome collision sensor. Detects stalled/collided disomes (pairs of ribosomes where the leading ribosome is stalled and a second ribosome has collided with it) and endonucleolytically cleaves mRNA at the 5' boundary of the stalled ribosome. Stalled/collided disomes form a new interface (primarily via the 30S subunits) that binds SmrB. Cleaved mRNA becomes available for tmRNA ligation, leading to ribosomal subunit dissociation and rescue of stalled ribosomes. The protein is Ribosome rescue factor SmrB of Shigella sonnei (strain Ss046).